The following is a 193-amino-acid chain: Holliday junction branch migration complex subunit RuvA (193 aa).

The domain I stretch occupies residues 1-64; the sequence is MIGRIAGTLI…EDAHLLYGFG (64 aa). The tract at residues 65-143 is domain II; sequence TAAERETFRQ…ADLGTVPGGP (79 aa). The tract at residues 144-151 is flexible linker; the sequence is AVSDDAVD. Residues 151 to 193 form a domain III region; that stretch reads DVLNALLALGYSDKEAAQAIKQVPAGTGVSEGIKLALKALSKG.

The protein belongs to the RuvA family. Homotetramer. Forms an RuvA(8)-RuvB(12)-Holliday junction (HJ) complex. HJ DNA is sandwiched between 2 RuvA tetramers; dsDNA enters through RuvA and exits via RuvB. An RuvB hexamer assembles on each DNA strand where it exits the tetramer. Each RuvB hexamer is contacted by two RuvA subunits (via domain III) on 2 adjacent RuvB subunits; this complex drives branch migration. In the full resolvosome a probable DNA-RuvA(4)-RuvB(12)-RuvC(2) complex forms which resolves the HJ.

The protein resides in the cytoplasm. The RuvA-RuvB-RuvC complex processes Holliday junction (HJ) DNA during genetic recombination and DNA repair, while the RuvA-RuvB complex plays an important role in the rescue of blocked DNA replication forks via replication fork reversal (RFR). RuvA specifically binds to HJ cruciform DNA, conferring on it an open structure. The RuvB hexamer acts as an ATP-dependent pump, pulling dsDNA into and through the RuvAB complex. HJ branch migration allows RuvC to scan DNA until it finds its consensus sequence, where it cleaves and resolves the cruciform DNA. In Ralstonia nicotianae (strain ATCC BAA-1114 / GMI1000) (Ralstonia solanacearum), this protein is Holliday junction branch migration complex subunit RuvA.